Reading from the N-terminus, the 429-residue chain is Histidine--tRNA ligase (429 aa).

It belongs to the class-II aminoacyl-tRNA synthetase family. In terms of assembly, homodimer.

Its subcellular location is the cytoplasm. The catalysed reaction is tRNA(His) + L-histidine + ATP = L-histidyl-tRNA(His) + AMP + diphosphate + H(+). This Pseudomonas fluorescens (strain Pf0-1) protein is Histidine--tRNA ligase.